Reading from the N-terminus, the 692-residue chain is Elongation factor G (692 aa).

Residues 8–282 (ENTRNIGIMA…AVIDYLPSPL (275 aa)) form the tr-type G domain. GTP-binding positions include 17-24 (AHIDAGKT), 81-85 (DTPGH), and 135-138 (NKMD).

Belongs to the TRAFAC class translation factor GTPase superfamily. Classic translation factor GTPase family. EF-G/EF-2 subfamily.

It localises to the cytoplasm. Catalyzes the GTP-dependent ribosomal translocation step during translation elongation. During this step, the ribosome changes from the pre-translocational (PRE) to the post-translocational (POST) state as the newly formed A-site-bound peptidyl-tRNA and P-site-bound deacylated tRNA move to the P and E sites, respectively. Catalyzes the coordinated movement of the two tRNA molecules, the mRNA and conformational changes in the ribosome. In Bacillus thuringiensis subsp. konkukian (strain 97-27), this protein is Elongation factor G.